We begin with the raw amino-acid sequence, 203 residues long: LexA repressor (203 aa).

Residues R32–R52 constitute a DNA-binding region (H-T-H motif). Catalysis depends on for autocatalytic cleavage activity residues S121 and K158.

The protein belongs to the peptidase S24 family. In terms of assembly, homodimer.

The catalysed reaction is Hydrolysis of Ala-|-Gly bond in repressor LexA.. In terms of biological role, represses a number of genes involved in the response to DNA damage (SOS response), including recA and lexA. In the presence of single-stranded DNA, RecA interacts with LexA causing an autocatalytic cleavage which disrupts the DNA-binding part of LexA, leading to derepression of the SOS regulon and eventually DNA repair. The protein is LexA repressor of Aromatoleum aromaticum (strain DSM 19018 / LMG 30748 / EbN1) (Azoarcus sp. (strain EbN1)).